A 654-amino-acid chain; its full sequence is Chaperone protein HtpG (654 aa).

The a; substrate-binding stretch occupies residues 1 to 344 (MTVENAPQRE…SDDLPLNVSR (344 aa)). Residues 345 to 556 (ELLQDSQVVR…EGGSPAYLER (212 aa)) are b. The segment at 557-654 (LLQQRGRGAG…AQTPASATAS (98 aa)) is c.

The protein belongs to the heat shock protein 90 family. As to quaternary structure, homodimer.

It is found in the cytoplasm. Functionally, molecular chaperone. Has ATPase activity. This chain is Chaperone protein HtpG, found in Myxococcus xanthus (strain DK1622).